The sequence spans 176 residues: Large ribosomal subunit protein uL6 (176 aa).

This sequence belongs to the universal ribosomal protein uL6 family. In terms of assembly, part of the 50S ribosomal subunit.

Its function is as follows. This protein binds to the 23S rRNA, and is important in its secondary structure. It is located near the subunit interface in the base of the L7/L12 stalk, and near the tRNA binding site of the peptidyltransferase center. The chain is Large ribosomal subunit protein uL6 from Burkholderia lata (strain ATCC 17760 / DSM 23089 / LMG 22485 / NCIMB 9086 / R18194 / 383).